The sequence spans 106 residues: Putative double-stranded DNA mimic protein VIBHAR_02752 (106 aa).

Belongs to the putative dsDNA mimic protein family.

Functionally, may act as a double-stranded DNA (dsDNA) mimic. Probably regulates the activity of a dsDNA-binding protein. The chain is Putative double-stranded DNA mimic protein VIBHAR_02752 from Vibrio campbellii (strain ATCC BAA-1116).